Here is a 322-residue protein sequence, read N- to C-terminus: MRIQFGYVAMSMELANASPSKTMTATQFEKIEDHEAGLRKLERIAKTNLHNCLRLLKHNLAYQISFFRLSSKLVPLVNHPLTEGWKYELAIAEELQAVGEFASEHQMRIDFHPDHFVVLNSEAKEITRRSLQTLLYHYKLLKGMEIDPRHRCVLHVGGKKKGVEAGLEQFIENTASIPKSLLSMIMLENDDKSYTIDDVLYLGEKLAIPVVLDIHHHDVLHRSKSLQETWQRIVATWEDSPLPVKIHLSSPLSGEDDPRHHDYINADRFIAFLHEIGADAVDHLHVMIEAKKKDLALFQLMKDLAEYDEITVVSKSAVEFNP.

It belongs to the uve1/UvsE family.

In terms of biological role, component in a DNA repair pathway. Removal of UV LIGHT damaged nucleotides. Recognizes pyrimidine dimers and cleave a phosphodiester bond immediately 5' to the lesion. This Halalkalibacterium halodurans (strain ATCC BAA-125 / DSM 18197 / FERM 7344 / JCM 9153 / C-125) (Bacillus halodurans) protein is UV DNA damage endonuclease.